We begin with the raw amino-acid sequence, 854 residues long: Translation initiation factor IF-2 (854 aa).

2 disordered regions span residues 52 to 79 and 128 to 265; these read RQHG…RDGG and RKQE…HGFQ. Over residues 61–75 the composition is skewed to polar residues; sequence SQRITLQRKTTSTLS. 2 stretches are compositionally biased toward basic and acidic residues: residues 128 to 150 and 211 to 232; these read RKQE…RQEA and VRHD…DNKR. Positions 247–257 are enriched in basic residues; that stretch reads RGKLGRKNKKP. The 170-residue stretch at 354 to 523 folds into the tr-type G domain; that stretch reads KRAPVVTVMG…LLQAEVLELT (170 aa). The interval 363–370 is G1; that stretch reads GHVDHGKT. 363-370 lines the GTP pocket; sequence GHVDHGKT. The tract at residues 388–392 is G2; it reads GITQH. The tract at residues 409–412 is G3; the sequence is DTPG. 409–413 is a GTP binding site; the sequence is DTPGH. A G4 region spans residues 463-466; sequence TKID. Residues 499 to 501 form a G5 region; that stretch reads SAK.

It belongs to the TRAFAC class translation factor GTPase superfamily. Classic translation factor GTPase family. IF-2 subfamily.

The protein resides in the cytoplasm. Functionally, one of the essential components for the initiation of protein synthesis. Protects formylmethionyl-tRNA from spontaneous hydrolysis and promotes its binding to the 30S ribosomal subunits. Also involved in the hydrolysis of GTP during the formation of the 70S ribosomal complex. The polypeptide is Translation initiation factor IF-2 (Marinomonas sp. (strain MWYL1)).